The primary structure comprises 298 residues: MKILVTGANGQVGWELARSLAVLGQVVPLARDEADLGRPETLARIVEDAKPDVVVNAAAYTAVDAAESDGAAAKVVNGEAVGVLAAATKRVGGLFVHYSTDYVFDGTKSSPYIETDPTCPVNAYGASKLLGELAVAETGGDWLTFRTTWVFAARGKNFLRTMLRLAKEREEMKIVADQFGAPTWARSIADGTAHALATAMRERAAGAFTSGVYHMTSAGQTSWHGFADAIVASWRAVPGAAPLAVSRIVPIPTSAYPVPARRPANSVLSNEALKERFGIELPDWRYAVGLCVRDLLSQ.

NADH-binding positions include 10–12, 35–36, and 59–61; these read GQV, DL, and AYT. NADPH contacts are provided by residues 11-12, 35-36, 59-61, and Tyr-98; these read QV, DL, and AYT. 100-101 contributes to the dTDP-beta-L-rhamnose binding site; that stretch reads TD. NADH contacts are provided by Tyr-124 and Lys-128. NADPH contacts are provided by Tyr-124 and Lys-128. The Proton donor/acceptor role is filled by Tyr-124. Trp-149 contacts dTDP-beta-L-rhamnose.

This sequence belongs to the dTDP-4-dehydrorhamnose reductase family. As to quaternary structure, homodimer. The cofactor is Mg(2+).

The enzyme catalyses dTDP-beta-L-rhamnose + NADP(+) = dTDP-4-dehydro-beta-L-rhamnose + NADPH + H(+). Its pathway is carbohydrate biosynthesis; dTDP-L-rhamnose biosynthesis. It participates in bacterial outer membrane biogenesis; LPS O-antigen biosynthesis. Involved in the biosynthesis of the dTDP-L-rhamnose which is an important component of lipopolysaccharide (LPS). Catalyzes the reduction of dTDP-6-deoxy-L-lyxo-4-hexulose to yield dTDP-L-rhamnose. In Burkholderia thailandensis (strain ATCC 700388 / DSM 13276 / CCUG 48851 / CIP 106301 / E264), this protein is dTDP-4-dehydrorhamnose reductase.